The sequence spans 348 residues: GTPase Obg 1 (348 aa).

An Obg domain is found at 1 to 159; that stretch reads MSFVDEAKIH…HCVLLKLKIV (159 aa). Positions 160–329 constitute an OBG-type G domain; sequence SDVGIIGMPN…LHAQVKKAVV (170 aa). Residues 166 to 173, 191 to 195, 212 to 215, 279 to 282, and 310 to 312 each bind GTP; these read GMPNAGKS, FTTLE, DIPG, NKCD, and GDE. Positions 173 and 193 each coordinate Mg(2+).

This sequence belongs to the TRAFAC class OBG-HflX-like GTPase superfamily. OBG GTPase family. As to quaternary structure, monomer. The cofactor is Mg(2+).

Its subcellular location is the cytoplasm. Its function is as follows. An essential GTPase which binds GTP, GDP and possibly (p)ppGpp with moderate affinity, with high nucleotide exchange rates and a fairly low GTP hydrolysis rate. Plays a role in control of the cell cycle, stress response, ribosome biogenesis and in those bacteria that undergo differentiation, in morphogenesis control. This Anaplasma marginale (strain Florida) protein is GTPase Obg 1.